Reading from the N-terminus, the 718-residue chain is Catalase-peroxidase (718 aa).

The segment at residues 98-219 (WHAAGTYRMG…LAATEMGLIY (122 aa)) is a cross-link (tryptophyl-tyrosyl-methioninium (Trp-Tyr) (with M-245)). Catalysis depends on histidine 99, which acts as the Proton acceptor. The tryptophyl-tyrosyl-methioninium (Tyr-Met) (with W-98) cross-link spans 219–245 (YVNPEGPQASGDPRSAAPFIRATFGNM). Histidine 260 contacts heme b.

Belongs to the peroxidase family. Peroxidase/catalase subfamily. In terms of assembly, homodimer or homotetramer. The cofactor is heme b. Post-translationally, formation of the three residue Trp-Tyr-Met cross-link is important for the catalase, but not the peroxidase activity of the enzyme.

The enzyme catalyses H2O2 + AH2 = A + 2 H2O. The catalysed reaction is 2 H2O2 = O2 + 2 H2O. In terms of biological role, bifunctional enzyme with both catalase and broad-spectrum peroxidase activity. This is Catalase-peroxidase from Acinetobacter baumannii (strain ACICU).